A 99-amino-acid polypeptide reads, in one-letter code: Transmembrane protein 14A (99 aa).

The next 3 helical transmembrane spans lie at 1–21 (MDLIGFGYAALVTFGSIFGYK), 24–44 (GGVPSLIAGLFVGCLAGYGAY), and 79–99 (PAGLVAGLSLMMILRLVLLLL).

Belongs to the TMEM14 family. As to expression, expressed at significantly higher levels in ovarian cancer tissues than in normal tissues (at protein level).

The protein resides in the mitochondrion membrane. It is found in the endoplasmic reticulum membrane. Inhibits apoptosis via negative regulation of the mitochondrial outer membrane permeabilization involved in apoptotic signaling pathway. In Homo sapiens (Human), this protein is Transmembrane protein 14A (TMEM14A).